A 141-amino-acid polypeptide reads, in one-letter code: Large ribosomal subunit protein uL22 (141 aa).

Belongs to the universal ribosomal protein uL22 family. As to quaternary structure, part of the 50S ribosomal subunit.

Functionally, this protein binds specifically to 23S rRNA; its binding is stimulated by other ribosomal proteins, e.g. L4, L17, and L20. It is important during the early stages of 50S assembly. It makes multiple contacts with different domains of the 23S rRNA in the assembled 50S subunit and ribosome. In terms of biological role, the globular domain of the protein is located near the polypeptide exit tunnel on the outside of the subunit, while an extended beta-hairpin is found that lines the wall of the exit tunnel in the center of the 70S ribosome. The chain is Large ribosomal subunit protein uL22 from Frankia alni (strain DSM 45986 / CECT 9034 / ACN14a).